A 454-amino-acid polypeptide reads, in one-letter code: Bifunctional protein GlmU (454 aa).

Residues 1–233 form a pyrophosphorylase region; that stretch reads MQATPRPLAL…EAETIGINSR (233 aa). Residues 13–16, lysine 27, glutamine 80, 85–86, 108–110, glycine 145, glutamate 159, asparagine 174, and asparagine 231 contribute to the UDP-N-acetyl-alpha-D-glucosamine site; these read LAAG, GT, and YGD. Aspartate 110 lines the Mg(2+) pocket. Asparagine 231 contacts Mg(2+). The tract at residues 234 to 254 is linker; the sequence is AELVRAEAQFQSQRRAALIEA. The segment at 255–454 is N-acetyltransferase; that stretch reads GVTMQAPDSV…KAIKDAKSKD (200 aa). UDP-N-acetyl-alpha-D-glucosamine contacts are provided by arginine 320 and lysine 338. Histidine 350 serves as the catalytic Proton acceptor. UDP-N-acetyl-alpha-D-glucosamine contacts are provided by tyrosine 353 and asparagine 364. Acetyl-CoA contacts are provided by residues alanine 367, 373-374, serine 392, serine 410, and arginine 427; that span reads NY.

In the N-terminal section; belongs to the N-acetylglucosamine-1-phosphate uridyltransferase family. This sequence in the C-terminal section; belongs to the transferase hexapeptide repeat family. Homotrimer. Mg(2+) is required as a cofactor.

Its subcellular location is the cytoplasm. The enzyme catalyses alpha-D-glucosamine 1-phosphate + acetyl-CoA = N-acetyl-alpha-D-glucosamine 1-phosphate + CoA + H(+). It catalyses the reaction N-acetyl-alpha-D-glucosamine 1-phosphate + UTP + H(+) = UDP-N-acetyl-alpha-D-glucosamine + diphosphate. It functions in the pathway nucleotide-sugar biosynthesis; UDP-N-acetyl-alpha-D-glucosamine biosynthesis; N-acetyl-alpha-D-glucosamine 1-phosphate from alpha-D-glucosamine 6-phosphate (route II): step 2/2. Its pathway is nucleotide-sugar biosynthesis; UDP-N-acetyl-alpha-D-glucosamine biosynthesis; UDP-N-acetyl-alpha-D-glucosamine from N-acetyl-alpha-D-glucosamine 1-phosphate: step 1/1. The protein operates within bacterial outer membrane biogenesis; LPS lipid A biosynthesis. Functionally, catalyzes the last two sequential reactions in the de novo biosynthetic pathway for UDP-N-acetylglucosamine (UDP-GlcNAc). The C-terminal domain catalyzes the transfer of acetyl group from acetyl coenzyme A to glucosamine-1-phosphate (GlcN-1-P) to produce N-acetylglucosamine-1-phosphate (GlcNAc-1-P), which is converted into UDP-GlcNAc by the transfer of uridine 5-monophosphate (from uridine 5-triphosphate), a reaction catalyzed by the N-terminal domain. The protein is Bifunctional protein GlmU of Jannaschia sp. (strain CCS1).